The chain runs to 785 residues: DNA ligase (785 aa).

NAD(+) is bound by residues 32 to 36 (DAEYD), 81 to 82 (SL), and glutamate 121. Lysine 123 serves as the catalytic N6-AMP-lysine intermediate. Residues arginine 144, glutamate 181, lysine 297, and lysine 321 each contribute to the NAD(+) site. The Zn(2+) site is built by cysteine 415, cysteine 418, cysteine 445, and cysteine 451. Positions 702–785 (VEGLPLAGET…AFLKGHGISA (84 aa)) constitute a BRCT domain.

This sequence belongs to the NAD-dependent DNA ligase family. LigA subfamily. Requires Mg(2+) as cofactor. It depends on Mn(2+) as a cofactor.

The catalysed reaction is NAD(+) + (deoxyribonucleotide)n-3'-hydroxyl + 5'-phospho-(deoxyribonucleotide)m = (deoxyribonucleotide)n+m + AMP + beta-nicotinamide D-nucleotide.. Its function is as follows. DNA ligase that catalyzes the formation of phosphodiester linkages between 5'-phosphoryl and 3'-hydroxyl groups in double-stranded DNA using NAD as a coenzyme and as the energy source for the reaction. It is essential for DNA replication and repair of damaged DNA. The protein is DNA ligase of Pseudomonas fluorescens (strain Pf0-1).